The following is a 434-amino-acid chain: Arrestin domain-containing protein 1 (434 aa).

The disordered stretch occupies residues 292–349 (SPCPGRESSPGTLSLVVPSAPPQEEAEAVASGPHFSDPVSLSTKSHSQQQPLSAPLGS). Residues 330–343 (VSLSTKSHSQQQPL) show a composition bias toward polar residues. 2 consecutive short sequence motifs (PPxY motif) follow at residues 401-404 (PPEY) and 414-417 (PPSY).

It belongs to the arrestin family. In terms of assembly, interacts (via PPxY motifs) with ITCH (via WW domains); the interaction is direct and participates in the recruitment of the ubiquitin-protein ligase ITCH to the NOTCH1 receptor. Interacts with ARRB1 and ARRB2; the interaction is direct. Interacts with TSG101; may recruit TSG101 to the plasma membrane. Interacts (via PPxY motifs) with WWP2 (via WW domains); ubiquitinates ARRDC1. Interacts with SLC11A2; controls the incorporation of SLC11A2 into extracellular vesicles through an ubiquitination-dependent mechanism. Interacts with WWP1 (via WW domains). Interacts with NEDD4 (via WW domains). Interacts with PDCD6IP. Ubiquitinated. Ubiquitination by WWP2; promotes localization to extracellular microvesicles. Ubiquitinated by WWP1.

The protein resides in the cell membrane. Functionally, functions as an adapter recruiting ubiquitin-protein ligases to their specific substrates. Through an ubiquitination-dependent mechanism plays for instance a role in the incorporation of SLC11A2 into extracellular vesicles. More generally, plays a role in the extracellular transport of proteins between cells through the release in the extracellular space of microvesicles. By participating to the ITCH-mediated ubiquitination and subsequent degradation of NOTCH1, negatively regulates the NOTCH signaling pathway. The sequence is that of Arrestin domain-containing protein 1 from Mus musculus (Mouse).